Consider the following 231-residue polypeptide: 5'-methylthioadenosine/S-adenosylhomocysteine nucleosidase (231 aa).

The Proton acceptor role is filled by Glu12. Substrate is bound by residues Gly78, Val153, and 174 to 175 (ME). The Proton donor role is filled by Asp198.

It belongs to the PNP/UDP phosphorylase family. MtnN subfamily.

It catalyses the reaction S-adenosyl-L-homocysteine + H2O = S-(5-deoxy-D-ribos-5-yl)-L-homocysteine + adenine. It carries out the reaction S-methyl-5'-thioadenosine + H2O = 5-(methylsulfanyl)-D-ribose + adenine. The enzyme catalyses 5'-deoxyadenosine + H2O = 5-deoxy-D-ribose + adenine. It functions in the pathway amino-acid biosynthesis; L-methionine biosynthesis via salvage pathway; S-methyl-5-thio-alpha-D-ribose 1-phosphate from S-methyl-5'-thioadenosine (hydrolase route): step 1/2. Its function is as follows. Catalyzes the irreversible cleavage of the glycosidic bond in both 5'-methylthioadenosine (MTA) and S-adenosylhomocysteine (SAH/AdoHcy) to adenine and the corresponding thioribose, 5'-methylthioribose and S-ribosylhomocysteine, respectively. Also cleaves 5'-deoxyadenosine, a toxic by-product of radical S-adenosylmethionine (SAM) enzymes, into 5-deoxyribose and adenine. The protein is 5'-methylthioadenosine/S-adenosylhomocysteine nucleosidase of Vibrio atlanticus (strain LGP32) (Vibrio splendidus (strain Mel32)).